A 172-amino-acid chain; its full sequence is Ribosome maturation factor RimM (172 aa).

The 73-residue stretch at 96–168 folds into the PRC barrel domain; the sequence is EGEFYYHEII…RVDVEIPEGL (73 aa).

The protein belongs to the RimM family. Binds ribosomal protein uS19.

The protein localises to the cytoplasm. In terms of biological role, an accessory protein needed during the final step in the assembly of 30S ribosomal subunit, possibly for assembly of the head region. Essential for efficient processing of 16S rRNA. May be needed both before and after RbfA during the maturation of 16S rRNA. It has affinity for free ribosomal 30S subunits but not for 70S ribosomes. This is Ribosome maturation factor RimM from Streptococcus gordonii (strain Challis / ATCC 35105 / BCRC 15272 / CH1 / DL1 / V288).